A 227-amino-acid chain; its full sequence is Guanylate kinase (227 aa).

Residues 21–199 (GNLFMVVAPS…ALAELECIVA (179 aa)) enclose the Guanylate kinase-like domain. 28-35 (APSGAGKS) is an ATP binding site.

It belongs to the guanylate kinase family.

Its subcellular location is the cytoplasm. It catalyses the reaction GMP + ATP = GDP + ADP. Essential for recycling GMP and indirectly, cGMP. In Burkholderia thailandensis (strain ATCC 700388 / DSM 13276 / CCUG 48851 / CIP 106301 / E264), this protein is Guanylate kinase.